The sequence spans 306 residues: Phosphoribosylaminoimidazole-succinocarboxamide synthase (306 aa).

Residue Ser-2 is modified to N-acetylserine.

Belongs to the SAICAR synthetase family. In terms of assembly, monomer.

The catalysed reaction is 5-amino-1-(5-phospho-D-ribosyl)imidazole-4-carboxylate + L-aspartate + ATP = (2S)-2-[5-amino-1-(5-phospho-beta-D-ribosyl)imidazole-4-carboxamido]succinate + ADP + phosphate + 2 H(+). It functions in the pathway purine metabolism; IMP biosynthesis via de novo pathway; 5-amino-1-(5-phospho-D-ribosyl)imidazole-4-carboxamide from 5-amino-1-(5-phospho-D-ribosyl)imidazole-4-carboxylate: step 1/2. Functionally, catalyzes the reaction of 4-carboxy-5-aminoimidazole ribotide (CAIR) and aspartic acid with the formation of N-succinyl-5-amino-imidazole-4-carboxamide ribotide (SAICAR) in the purine biosynthesis pathway. The chain is Phosphoribosylaminoimidazole-succinocarboxamide synthase (ADE1) from Saccharomyces cerevisiae (strain ATCC 204508 / S288c) (Baker's yeast).